A 293-amino-acid chain; its full sequence is tRNA pseudouridine synthase B (293 aa).

D39 serves as the catalytic Nucleophile.

This sequence belongs to the pseudouridine synthase TruB family. Type 1 subfamily.

It carries out the reaction uridine(55) in tRNA = pseudouridine(55) in tRNA. Functionally, responsible for synthesis of pseudouridine from uracil-55 in the psi GC loop of transfer RNAs. The protein is tRNA pseudouridine synthase B of Rickettsia bellii (strain OSU 85-389).